Reading from the N-terminus, the 530-residue chain is Hyccin 2 (530 aa).

A phosphothreonine mark is found at Thr30 and Thr306. A phosphoserine mark is found at Ser321 and Ser341. The tract at residues 328 to 410 is disordered; the sequence is RREGAEGVNG…DSVVRKQYVQ (83 aa). The span at 353 to 373 shows a compositional bias: polar residues; that stretch reads SGASLSSQPIGTKPSSSSQRG. Phosphoserine is present on residues Ser430, Ser442, Ser444, and Ser491. A disordered region spans residues 502–530; sequence EGKELLSPGAPLTKQSRSPSFNMQLISQV. Residues 514–530 are compositionally biased toward polar residues; that stretch reads TKQSRSPSFNMQLISQV.

Belongs to the Hyccin family. Component of a phosphatidylinositol 4-kinase (PI4K) complex, composed of PI4KA, EFR3 (EFR3A or EFR3B), TTC7 (TTC7A or TTC7B) and HYCC (HYCC1 or HYCC2).

It localises to the cytoplasm. The protein resides in the cytosol. It is found in the cell membrane. Functionally, component of a complex required to localize phosphatidylinositol 4-kinase (PI4K) to the plasma membrane. The polypeptide is Hyccin 2 (Homo sapiens (Human)).